The primary structure comprises 277 residues: Serine protease 33 (277 aa).

An N-terminal signal peptide occupies residues M1–A24. The region spanning I34 to S276 is the Peptidase S1 domain. A disulfide bond links C59 and C75. Catalysis depends on charge relay system residues H74 and D123. Disulfide bonds link C157/C234, C190/C213, and C224/C252. The Charge relay system role is filled by S228.

This sequence belongs to the peptidase S1 family. Post-translationally, not glycosylated. In terms of tissue distribution, widely expressed.

It localises to the secreted. In terms of biological role, serine protease that has amidolytic activity, cleaving its substrates before Arg residues. The chain is Serine protease 33 (Prss33) from Mus musculus (Mouse).